Consider the following 296-residue polypeptide: HTH-type transcriptional regulator GltR (296 aa).

The HTH lysR-type domain maps to 1–58; it reads MNIQLLQVFLTTAREGSISKAALTLNYAQSNVTNKIQQLENDLQTKLFYRHSRGITLT. A DNA-binding region (H-T-H motif) is located at residues 18–37; it reads ISKAALTLNYAQSNVTNKIQ.

It belongs to the LysR transcriptional regulatory family.

Its function is as follows. Positive regulator of glutamate biosynthesis (gltAB genes). Negatively regulates its own expression. This chain is HTH-type transcriptional regulator GltR (gltR), found in Bacillus subtilis (strain 168).